The sequence spans 442 residues: Circumsporozoite protein (442 aa).

An N-terminal signal peptide occupies residues 1-18; that stretch reads MMRKLAILSVSSFLFVEA. The tract at residues 69–357 is disordered; the sequence is SRSLGENDDG…VKNNNNEEPS (289 aa). The segment covering 81–94 has biased composition (low complexity); sequence DNGNNNNGNNNNGD. The span at 95–115 shows a compositional bias: basic and acidic residues; it reads NGREGKDEDKRDGNNEDNEKL. Residues 114–121 are required for the binding to heparan sulfate proteoglycans (HSPGs) on the surface of host hepatocytes; that stretch reads KLRKPKHK. The interval 122–126 is region I; contains the proteolytic cleavage site; the sequence is KLKQP. Residues 130-318 show a composition bias toward low complexity; the sequence is NPDPNANPNV…PNANPNANPN (189 aa). 46 tandem repeats follow at residues 134–137, 138–141, 142–145, 146–149, 150–153, 154–157, 158–161, 162–165, 166–169, 170–173, 174–177, 178–181, 182–185, 186–189, 190–193, 194–197, 198–201, 202–205, 206–209, 210–213, 214–217, 218–221, 222–225, 226–229, 230–233, 234–237, 238–241, 242–245, 246–249, 250–253, 254–257, 258–261, 262–265, 266–269, 270–273, 274–277, 278–281, 282–285, 286–289, 290–293, 294–297, 298–301, 302–305, 306–309, 310–313, and 314–317. The interval 134–317 is 46 X 4 AA tandem repeats of N-[AV]-[ND]-P; the sequence is NANPNVDPNA…NPNANPNANP (184 aa). Over residues 319–334 the composition is skewed to polar residues; it reads KNNQGNGQGHNMPNDP. The span at 340–354 shows a compositional bias: low complexity; the sequence is ENANANNAVKNNNNE. The TSP type-1 domain occupies 367-420; that stretch reads KIQNSLSTEWSPCSVTCGNGIQVRIKPGSADKPKDQLDYENDIEKKICKMEKCS. 2 cysteine pairs are disulfide-bonded: C379-C414 and C383-C419. T382 carries O-linked (Fuc) threonine glycosylation. C419 is lipidated: GPI-anchor amidated cysteine. The propeptide at 420 to 442 is removed in mature form; the sequence is SSVFNVVNSSIGLIMVLSFLFLN.

This sequence belongs to the plasmodium circumsporozoite protein family. Post-translationally, during host cell invasion, proteolytically cleaved at the cell membrane in the region I by a papain-like cysteine protease of parasite origin. Cleavage is triggered by the sporozoite contact with highly sulfated heparan sulfate proteoglycans (HSPGs) present on the host hepatocyte cell surface. Cleavage exposes the TSP type-1 (TSR) domain and is required for productive invasion of host hepatocytes but not for adhesion to the host cell membrane. Cleavage is dispensable for sporozoite development in the oocyst, motility and for traversal of host and vector cells. O-glycosylated; maybe by POFUT2.

It is found in the cell membrane. The protein localises to the cytoplasm. In terms of biological role, essential sporozoite protein. In the mosquito vector, required for sporozoite development in the oocyst, migration through the vector hemolymph and entry into the vector salivary glands. In the vertebrate host, required for sporozoite migration through the host dermis and infection of host hepatocytes. Binds to highly sulfated heparan sulfate proteoglycans (HSPGs) on the surface of host hepatocytes. Its function is as follows. In the vertebrate host, binds to highly sulfated heparan sulfate proteoglycans (HSPGs) on the surface of host hepatocytes and is required for sporozoite invasion of the host hepatocytes. The protein is Circumsporozoite protein of Plasmodium falciparum (isolate Wellcome).